The sequence spans 334 residues: Protein U17/U16 (334 aa).

It belongs to the herpesviridae US22 family.

Its function is as follows. Isoform 3 can transactivate the human immunodeficiency virus type 1 promoter. The sequence is that of Protein U17/U16 (U17/U16) from Human herpesvirus 6A (strain Uganda-1102) (HHV-6 variant A).